Consider the following 100-residue polypeptide: uncharacterized protein (100 aa).

The first 17 residues, 1–17, serve as a signal peptide directing secretion; it reads MIMKYFCTVMIAIALVG. A lipid anchor (N-palmitoyl cysteine) is attached at Cys-18. The S-diacylglycerol cysteine moiety is linked to residue Cys-18.

Its subcellular location is the cell membrane. This is an uncharacterized protein from Salmonella typhi.